Consider the following 839-residue polypeptide: Taste receptor type 1 member 2 (839 aa).

An N-terminal signal peptide occupies residues 1–19 (MGPRAKTISSLFFLLWVLA). Residues 20-566 (EPAENSDFYL…VFLEWHEAPT (547 aa)) lie on the Extracellular side of the membrane. N-linked (GlcNAc...) asparagine glycans are attached at residues Asn-84, Asn-248, Asn-292, Asn-312, Asn-368, Asn-428, Asn-487, and Asn-527. The helical transmembrane segment at 567 to 587 (IAVALLAALGFLSTLAILVIF) threads the bilayer. Residues 588–602 (WRHFQTPIVRSAGGP) lie on the Cytoplasmic side of the membrane. A helical membrane pass occupies residues 603–623 (MCFLMLTLLLVAYMVVPVYVG). At 624–635 (PPKVSTCLCRQA) the chain is on the extracellular side. A helical transmembrane segment spans residues 636–656 (LFPLCFTICISCIAVRSFQIV). The Cytoplasmic segment spans residues 657 to 681 (CAFKMASRFPRAYSYWVRYQGPYVS). The helical transmembrane segment at 682–702 (MAFITVLKMVIVVIGMLATGL) threads the bilayer. The Extracellular portion of the chain corresponds to 703 to 727 (SPTTRTDPDDPKITIVSCNPNYRNS). Residues 728 to 748 (LLFNTSLDLLLSVVGFSFAYM) form a helical membrane-spanning segment. At 749–760 (GKELPTNYNEAK) the chain is on the cytoplasmic side. Residues 761–781 (FITLSMTFYFTSSVSLCTFMS) form a helical membrane-spanning segment. At 782-784 (AYS) the chain is on the extracellular side. A helical transmembrane segment spans residues 785–805 (GVLVTIVDLLVTVLNLLAISL). Over 806-839 (GYFGPKCYMILFYPERNTPAYFNSMIQGYTMRRD) the chain is Cytoplasmic.

Belongs to the G-protein coupled receptor 3 family. TAS1R subfamily. Forms heterodimers with TAS1R3.

It is found in the cell membrane. Functionally, putative taste receptor. TAS1R2/TAS1R3 recognizes diverse natural and synthetic sweeteners. The chain is Taste receptor type 1 member 2 (TAS1R2) from Homo sapiens (Human).